A 366-amino-acid polypeptide reads, in one-letter code: Chorismate synthase (366 aa).

NADP(+)-binding residues include R48 and R54. FMN contacts are provided by residues 125-127 (RSS), 238-239 (NA), G278, 293-297 (KPTSS), and R319.

This sequence belongs to the chorismate synthase family. As to quaternary structure, homotetramer. FMNH2 is required as a cofactor.

It carries out the reaction 5-O-(1-carboxyvinyl)-3-phosphoshikimate = chorismate + phosphate. It functions in the pathway metabolic intermediate biosynthesis; chorismate biosynthesis; chorismate from D-erythrose 4-phosphate and phosphoenolpyruvate: step 7/7. Its function is as follows. Catalyzes the anti-1,4-elimination of the C-3 phosphate and the C-6 proR hydrogen from 5-enolpyruvylshikimate-3-phosphate (EPSP) to yield chorismate, which is the branch point compound that serves as the starting substrate for the three terminal pathways of aromatic amino acid biosynthesis. This reaction introduces a second double bond into the aromatic ring system. The chain is Chorismate synthase from Methylococcus capsulatus (strain ATCC 33009 / NCIMB 11132 / Bath).